A 395-amino-acid polypeptide reads, in one-letter code: Putative carbonic anhydrase 1 (395 aa).

The signal sequence occupies residues 1 to 24 (MKLQGAGCVVAAVLGALFIVNVES). One can recognise an Alpha-carbonic anhydrase domain in the interval 42-365 (ISYDVRSTIG…LNDRPVFLVR (324 aa)). Zn(2+) contacts are provided by histidine 139, histidine 141, and histidine 165.

It belongs to the alpha-carbonic anhydrase family. Zn(2+) is required as a cofactor. Component of the acid-insoluble and acid-soluble organic matrix of calcified layers of the shell (at protein level).

It localises to the secreted. The catalysed reaction is hydrogencarbonate + H(+) = CO2 + H2O. Functionally, reversible hydration of carbon dioxide. The polypeptide is Putative carbonic anhydrase 1 (Lottia gigantea (Giant owl limpet)).